The sequence spans 406 residues: 2,3-bisphosphoglycerate-independent phosphoglycerate mutase (406 aa).

The protein belongs to the BPG-independent phosphoglycerate mutase family. A-PGAM subfamily.

The enzyme catalyses (2R)-2-phosphoglycerate = (2R)-3-phosphoglycerate. It functions in the pathway carbohydrate degradation; glycolysis; pyruvate from D-glyceraldehyde 3-phosphate: step 3/5. In terms of biological role, catalyzes the interconversion of 2-phosphoglycerate and 3-phosphoglycerate. This is 2,3-bisphosphoglycerate-independent phosphoglycerate mutase from Methanococcus vannielii (strain ATCC 35089 / DSM 1224 / JCM 13029 / OCM 148 / SB).